The following is a 641-amino-acid chain: MTTFSKTPLLDTIKTPEDLRRLKVEQVRQVADELRQETIDAVSVTGGHFGAGLGVVELTTAIHYVFDTPRDRLIWDVGHQAYPHKILTGRRDRIRTLRTGGGLSGFTKRAESDYDPFGAAHSSTSISAGLGMAVARDLSGGKNNVIAVIGDGAMSAGMAYEAMNNAGAMNSRLIVILNDNDMSIAPPVGAMSAYLSRLYSGKTYRTLRDAAKQLGQHLPKVIANRASRVEEYSRGFMMDGGTLFEELGFYYVGPIDGHNLDHLLPVLKNVRDMETGPILVHVVTQKGKGYSPAEAAADKYHAVAKFDIATGTQAKAKPNAPAYQNVFGQSLVKEAEKDEKIVGITAAMPSGTGIDIFAKAFPKRTFDVGIAEQHAVTFAAGLAAEGYKPFCAIYSTFLQRGYDQIVHDVCIQSLPVRFAIDRAGLVGADGATHAGSFDNAYLGCLPNMVIMAASDEAELVHMVATQVAIDDRPSSVRYPRGEGRGVEMPEVGVALPIGKGRMIRQGKQVALLSFGTRLAECEKAADELAAHGLSASIADARFMKPLDEELVLKLARDHEILITIEEGSIGGFGSHVMQYLADQGMLDGGLKMRSMVLPDEFQDHDTPAAMYARAGLDAKGIVRKVFEVLGKDYAAEAVKLA.

Residues His79 and 120-122 (AHS) contribute to the thiamine diphosphate site. Mg(2+) is bound at residue Asp151. Residues 152–153 (GA), Asn180, Tyr290, and Glu372 each bind thiamine diphosphate. A Mg(2+)-binding site is contributed by Asn180.

This sequence belongs to the transketolase family. DXPS subfamily. In terms of assembly, homodimer. It depends on Mg(2+) as a cofactor. Thiamine diphosphate is required as a cofactor.

It carries out the reaction D-glyceraldehyde 3-phosphate + pyruvate + H(+) = 1-deoxy-D-xylulose 5-phosphate + CO2. It participates in metabolic intermediate biosynthesis; 1-deoxy-D-xylulose 5-phosphate biosynthesis; 1-deoxy-D-xylulose 5-phosphate from D-glyceraldehyde 3-phosphate and pyruvate: step 1/1. Its function is as follows. Catalyzes the acyloin condensation reaction between C atoms 2 and 3 of pyruvate and glyceraldehyde 3-phosphate to yield 1-deoxy-D-xylulose-5-phosphate (DXP). This Bradyrhizobium sp. (strain ORS 278) protein is 1-deoxy-D-xylulose-5-phosphate synthase.